Consider the following 244-residue polypeptide: Type III pantothenate kinase (244 aa).

Position 8–15 (8–15 (DQGNSACK)) interacts with ATP. Substrate is bound by residues tyrosine 88 and 94–97 (GADR). Residue aspartate 96 is the Proton acceptor of the active site. Position 117 (aspartate 117) interacts with K(+). Threonine 120 contacts ATP. Threonine 175 is a binding site for substrate.

This sequence belongs to the type III pantothenate kinase family. In terms of assembly, homodimer. The cofactor is NH4(+). K(+) is required as a cofactor.

The protein resides in the cytoplasm. The enzyme catalyses (R)-pantothenate + ATP = (R)-4'-phosphopantothenate + ADP + H(+). It functions in the pathway cofactor biosynthesis; coenzyme A biosynthesis; CoA from (R)-pantothenate: step 1/5. Functionally, catalyzes the phosphorylation of pantothenate (Pan), the first step in CoA biosynthesis. This chain is Type III pantothenate kinase, found in Porphyromonas gingivalis (strain ATCC BAA-308 / W83).